We begin with the raw amino-acid sequence, 349 residues long: MDPGRVVFDSGVARRACPGGAQMLLFGGGGSANSGGFFRGVPAAVLGMDESRSSSSAAGAGAKRPFFTTHEELLEEEYYDEQAPEKKRRLTAEQVQMLERSFEEENKLEPERKTELARRLGMAPRQVAVWFQNRRARWKTKQLEHDFDRLKAAYDALAADHHALLSDNDRLRAQVISLTEKLQDKETSPSSATITTAAQEVDQPDEHTEAASTTGFATVDGALAAPPPGHQQPPHKDDLVSSGGTNDDGDGGAAVVVFDVTEGANDRLSCESAYFADAAEAYERDCAGHYALSSEEEDGGAVSDEGCSFDLPDAAAAAAAMFGAAGVVHHDAADDEEAQLGSWTAWFWS.

The segment at residues 83–142 (APEKKRRLTAEQVQMLERSFEEENKLEPERKTELARRLGMAPRQVAVWFQNRRARWKTKQ) is a DNA-binding region (homeobox). The interval 141–185 (KQLEHDFDRLKAAYDALAADHHALLSDNDRLRAQVISLTEKLQDK) is leucine-zipper. Residues 181-253 (KLQDKETSPS…GTNDDGDGGA (73 aa)) are disordered. The segment covering 188–198 (SPSSATITTAA) has biased composition (low complexity).

Belongs to the HD-ZIP homeobox family. Class I subfamily. As to quaternary structure, homodimer. May form a heterodimer with HOX4. In terms of tissue distribution, expressed in seedlings, roots, leaves, nodes, internodes, flowers and embryo.

It is found in the nucleus. In terms of biological role, probable transcription activator that binds to the DNA sequence 5'-CAAT[AT]ATTG-3'. The chain is Homeobox-leucine zipper protein HOX5 (HOX5) from Oryza sativa subsp. japonica (Rice).